The sequence spans 330 residues: Glucokinase (330 aa).

This sequence belongs to the ROK (NagC/XylR) family.

The protein resides in the cytoplasm. The enzyme catalyses D-glucose + ATP = D-glucose 6-phosphate + ADP + H(+). The protein is Glucokinase (glcK) of Halalkalibacterium halodurans (strain ATCC BAA-125 / DSM 18197 / FERM 7344 / JCM 9153 / C-125) (Bacillus halodurans).